Reading from the N-terminus, the 872-residue chain is Telomerase component p95 (872 aa).

Disordered stretches follow at residues 55–75 (NQDQ…NSNK) and 471–492 (KNNK…ESTS). Basic and acidic residues predominate over residues 474–486 (KNQEETPETKDET).

Telomerase consist of two subunit, p80 and p95 that form a 1:1:1 complex with the 159 nt telomerase RNA.

The protein localises to the nucleus. The protein resides in the chromosome. Its subcellular location is the telomere. The catalysed reaction is DNA(n) + a 2'-deoxyribonucleoside 5'-triphosphate = DNA(n+1) + diphosphate. Functionally, ribonucleoprotein DNA polymerase that catalyzes the de novo synthesis of telomeric simple sequence repeats. Subunit p95 contains some or all of the template-independent primer DNA-binding site termed the anchor site. In Tetrahymena thermophila, this protein is Telomerase component p95.